Here is a 255-residue protein sequence, read N- to C-terminus: uncharacterized protein (255 aa).

Belongs to the methyltransferase superfamily.

This is an uncharacterized protein from Mycobacterium ulcerans (strain Agy99).